The sequence spans 221 residues: Ribosomal RNA small subunit methyltransferase G 3 (221 aa).

S-adenosyl-L-methionine is bound by residues Gly85, Phe90, 136 to 137 (IE), and Arg150.

This sequence belongs to the methyltransferase superfamily. RNA methyltransferase RsmG family.

Its subcellular location is the cytoplasm. The catalysed reaction is guanosine(527) in 16S rRNA + S-adenosyl-L-methionine = N(7)-methylguanosine(527) in 16S rRNA + S-adenosyl-L-homocysteine. Functionally, specifically methylates the N7 position of guanine in position 527 of 16S rRNA. This is Ribosomal RNA small subunit methyltransferase G 3 from Bdellovibrio bacteriovorus (strain ATCC 15356 / DSM 50701 / NCIMB 9529 / HD100).